The sequence spans 1031 residues: MMS19 nucleotide excision repair protein homolog (1031 aa).

At alanine 2 the chain carries N-acetylalanine. HEAT repeat units follow at residues 867-905 (QRFF…RLPK), 909-947 (LPEL…EAPQ), 950-988 (SLHV…LPTS), and 991-1029 (LPYK…LGSP). Position 1028 is a phosphoserine (serine 1028).

Belongs to the MET18/MMS19 family. Component of the CIA complex. In the CIA complex, interacts directly with CIAO2B and CIAO3. Component of the MMXD complex, composed of CIAO1, ERCC2, CIAO2B, MMS19 and SLC25A5. Interacts with CIAO2B; the interaction is direct. Interacts with ERCC2/XPD; the interaction is direct. Interacts with ERCC3/XPB and NCOA3/RAC3. Interacts with RTEL1; the interaction mediates the association of RTEL1 with the CIA complex. Interacts with BRIP1. Interacts with KIF4A; the interaction facilitates the transfer of Fe-S clusters to KIF4A to ensure proper localization of KIF4A to the mitotic machinery components. Interacts with CCDC117; the interaction is indirect. Ubiquitinated; undergoes 'Lys-48'-linked polyubiquitination. In terms of tissue distribution, ubiquitously expressed with higher expression in testis.

Its subcellular location is the nucleus. It is found in the cytoplasm. The protein localises to the cytoskeleton. It localises to the spindle. Its function is as follows. Key component of the cytosolic iron-sulfur protein assembly (CIA) complex, a multiprotein complex that mediates the incorporation of iron-sulfur cluster into apoproteins specifically involved in DNA metabolism and genomic integrity. In the CIA complex, MMS19 acts as an adapter between early-acting CIA components and a subset of cellular target Fe/S proteins such as ERCC2/XPD, FANCJ and RTEL1, thereby playing a key role in nucleotide excision repair (NER), homologous recombination-mediated double-strand break DNA repair, DNA replication and RNA polymerase II (POL II) transcription. As a CIA complex component and in collaboration with CIAO1 and CIAO2, binds to and facilitates the assembly of most cytosolic-nuclear Fe/S proteins. As part of the mitotic spindle-associated MMXD complex, plays a role in chromosome segregation, probably by facilitating iron-sulfur cluster assembly into ERCC2/XPD. Together with CIAO2, facilitates the transfer of Fe-S clusters to the motor protein KIF4A, which ensures proper localization of KIF4A to mitotic machinery components to promote the progression of mitosis. Indirectly acts as a transcriptional coactivator of estrogen receptor (ER), via its role in iron-sulfur insertion into some component of the TFIIH-machinery. The sequence is that of MMS19 nucleotide excision repair protein homolog from Mus musculus (Mouse).